A 308-amino-acid chain; its full sequence is Apolipoprotein E (308 aa).

The N-terminal stretch at 1-18 (MKFLWAALVVTLLAGCQA) is a signal peptide. 8 tandem repeats follow at residues 75–96 (LLIE…KQVG), 97–118 (PIAQ…ARLE), 119–140 (SDME…AALG), 141–162 (QNTD…KRLL), 163–184 (RDAE…EAAE), 185–206 (RGVS…LQAI), 207–224 (PPSQ…QKVR), and 225–246 (GRLE…DQME). Residues 75–246 (LLIEETMKEV…RLDDVRDQME (172 aa)) form an 8 X 22 AA approximate tandem repeats region. The tract at residues 153 to 163 (HLRKLRKRLLR) is LDL and other lipoprotein receptors binding. Position 157–160 (157–160 (LRKR)) interacts with heparin. Residues 205–281 (AIPPSQQLRE…SWFEPLVQDM (77 aa)) form a lipid-binding and lipoprotein association region. 220–227 (GQKVRGRL) contributes to the heparin binding site. The homooligomerization stretch occupies residues 257–308 (SQVRLQAEAFQTRLKSWFEPLVQDMQRQWASLVEKVQSSLGISPSTKPSKTK). A specificity for association with VLDL region spans residues 269–281 (RLKSWFEPLVQDM).

It belongs to the apolipoprotein A1/A4/E family. In terms of assembly, homotetramer. May interact with ABCA1; functionally associated with ABCA1 in the biogenesis of HDLs. May interact with APP/A4 amyloid-beta peptide; the interaction is extremely stable in vitro but its physiological significance is unclear. May interact with MAPT. May interact with MAP2. In the cerebrospinal fluid, interacts with secreted SORL1. Interacts with PMEL; this allows the loading of PMEL luminal fragment on ILVs to induce fibril nucleation. In terms of processing, APOE exists as multiple glycosylated and sialylated glycoforms within cells and in plasma. The extent of glycosylation and sialylation are tissue and context specific. Glycated in plasma VLDL. Post-translationally, phosphorylated by FAM20C in the extracellular medium.

The protein resides in the secreted. The protein localises to the extracellular space. It localises to the extracellular matrix. It is found in the extracellular vesicle. Its subcellular location is the endosome. The protein resides in the multivesicular body. Its function is as follows. APOE is an apolipoprotein, a protein associating with lipid particles, that mainly functions in lipoprotein-mediated lipid transport between organs via the plasma and interstitial fluids. APOE is a core component of plasma lipoproteins and is involved in their production, conversion and clearance. Apolipoproteins are amphipathic molecules that interact both with lipids of the lipoprotein particle core and the aqueous environment of the plasma. As such, APOE associates with chylomicrons, chylomicron remnants, very low density lipoproteins (VLDL) and intermediate density lipoproteins (IDL) but shows a preferential binding to high-density lipoproteins (HDL). It also binds a wide range of cellular receptors including the LDL receptor/LDLR and the very low-density lipoprotein receptor/VLDLR that mediate the cellular uptake of the APOE-containing lipoprotein particles. Finally, APOE also has a heparin-binding activity and binds heparan-sulfate proteoglycans on the surface of cells, a property that supports the capture and the receptor-mediated uptake of APOE-containing lipoproteins by cells. In Pteropus alecto (Black flying fox), this protein is Apolipoprotein E (APOE).